A 116-amino-acid polypeptide reads, in one-letter code: Ig heavy chain V region 1B43 (116 aa).

The signal sequence occupies residues 1–18 (MRVLILLCLFTAFPGILS). Residues 19–48 (DVQLQESGPDLVKPSQSLSLTCTVTGYSIT) form a framework-1 region. Cysteines 40 and 114 form a disulfide. The interval 49–53 (SGYSW) is complementarity-determining-1. Positions 54 to 67 (HWIRQFPGNKLEWM) are framework-2. Residues 68-84 (GYIHYSGNTSYNPSLKS) are complementarity-determining-2. Residues 85 to 116 (RISITRDTSKNQFFLQLNSVTTEDTATYYCAR) are framework-3.

The chain is Ig heavy chain V region 1B43 from Mus musculus (Mouse).